A 342-amino-acid chain; its full sequence is Cell division protein FtsQ (342 aa).

Residues 1-80 (MDGAGSLTRS…ALVERYLPRR (80 aa)) are Cytoplasmic-facing. The chain crosses the membrane as a helical span at residues 81 to 99 (VGISMTVLLLIGSCGFGIV). Residues 100 to 342 (KGGHLQDFVT…KKKKKAGDAA (243 aa)) are Periplasmic-facing. One can recognise a POTRA domain in the interval 124–192 (FRITSVVING…GQLMIELTER (69 aa)).

This sequence belongs to the FtsQ/DivIB family. FtsQ subfamily.

The protein resides in the cell inner membrane. Essential cell division protein. The protein is Cell division protein FtsQ of Bradyrhizobium diazoefficiens (strain JCM 10833 / BCRC 13528 / IAM 13628 / NBRC 14792 / USDA 110).